A 343-amino-acid polypeptide reads, in one-letter code: Small ribosomal subunit biogenesis GTPase RsgA (343 aa).

Residues Arg-116–Phe-275 enclose the CP-type G domain. GTP-binding positions include Asn-163 to Asp-166 and Gly-217 to Ser-225. Positions 299, 304, 306, and 312 each coordinate Zn(2+).

It belongs to the TRAFAC class YlqF/YawG GTPase family. RsgA subfamily. In terms of assembly, monomer. Associates with 30S ribosomal subunit, binds 16S rRNA. Requires Zn(2+) as cofactor.

The protein resides in the cytoplasm. Functionally, one of several proteins that assist in the late maturation steps of the functional core of the 30S ribosomal subunit. Helps release RbfA from mature subunits. May play a role in the assembly of ribosomal proteins into the subunit. Circularly permuted GTPase that catalyzes slow GTP hydrolysis, GTPase activity is stimulated by the 30S ribosomal subunit. This is Small ribosomal subunit biogenesis GTPase RsgA from Azotobacter vinelandii (strain DJ / ATCC BAA-1303).